The sequence spans 357 residues: MLRRGFLSRINAAQWSRQMSVVAKSLKYTQHGEPQEVLQLVEDKLPDPKDNQVLVKILAAPINPADINTIQGKYPVKPKFPAVGGNECVAEVICVGDKVKGFEAGQHVIPLASGLGTWTTHAVYKEDQLLIVSKKVGLAEAATSTVNPTTAYRMLKDFVQLCPGDTVIQNGANSAVGQAVHQLCRAWGINSVGIVRDRPEIAELKQMLQCLGATEVLTEAEIRTSDIFKSGKLKKPRLAFNCVGGKSATEVSRHLDNGGVLVTYGGMSREPVTVATGPLIFKDIAFRGFWMTRWSKENYSSPERSKMFKEIFELMEQGKFVAPNHEMVPLAKFKDAAAAALSFKGFTGKKYILDMSI.

A mitochondrion-targeting transit peptide spans Met1–Met19. Residues Glu36–Ile352 form the Enoyl reductase (ER) domain. Catalysis depends on Tyr74, which acts as the Proton donor. NADP(+) contacts are provided by residues Asn147, Asn173–Val176, Arg196–Arg198, Tyr264–Met267, Phe289–Met291, Lys349, and Lys350.

This sequence belongs to the zinc-containing alcohol dehydrogenase family. Quinone oxidoreductase subfamily. In terms of assembly, homodimer. Expressed in the central nervous system.

Its subcellular location is the mitochondrion. It catalyses the reaction a 2,3-saturated acyl-[ACP] + NADP(+) = a (2E)-enoyl-[ACP] + NADPH + H(+). Catalyzes the NADPH-dependent reduction of trans-2-enoyl thioesters in mitochondrial fatty acid synthesis (fatty acid synthesis type II). Fatty acid chain elongation in mitochondria uses acyl carrier protein (ACP) as an acyl group carrier, but the enzyme accepts both ACP and CoA thioesters as substrates in vitro. Involved in iron homeostasis; affecting Fe-S cluster assembly and ceramide metabolism. Required for proper morphology and bioenergetic functions of mitochondria. Required for maintenance of neurons, including photoreceptor neurons. The chain is Enoyl-[acyl-carrier-protein] reductase, mitochondrial from Drosophila melanogaster (Fruit fly).